We begin with the raw amino-acid sequence, 288 residues long: ATP synthase gamma chain (288 aa).

This sequence belongs to the ATPase gamma chain family. As to quaternary structure, F-type ATPases have 2 components, CF(1) - the catalytic core - and CF(0) - the membrane proton channel. CF(1) has five subunits: alpha(3), beta(3), gamma(1), delta(1), epsilon(1). CF(0) has three main subunits: a, b and c.

The protein resides in the cell inner membrane. Its function is as follows. Produces ATP from ADP in the presence of a proton gradient across the membrane. The gamma chain is believed to be important in regulating ATPase activity and the flow of protons through the CF(0) complex. This chain is ATP synthase gamma chain, found in Aliivibrio salmonicida (strain LFI1238) (Vibrio salmonicida (strain LFI1238)).